Here is a 141-residue protein sequence, read N- to C-terminus: Large ribosomal subunit protein uL11 (141 aa).

It belongs to the universal ribosomal protein uL11 family. Part of the ribosomal stalk of the 50S ribosomal subunit. Interacts with L10 and the large rRNA to form the base of the stalk. L10 forms an elongated spine to which L12 dimers bind in a sequential fashion forming a multimeric L10(L12)X complex. One or more lysine residues are methylated.

Its function is as follows. Forms part of the ribosomal stalk which helps the ribosome interact with GTP-bound translation factors. In Tropheryma whipplei (strain TW08/27) (Whipple's bacillus), this protein is Large ribosomal subunit protein uL11.